The chain runs to 235 residues: Carbohydrate deacetylase (235 aa).

Mg(2+) contacts are provided by His-61 and His-124.

This sequence belongs to the YdjC deacetylase family. It depends on Mg(2+) as a cofactor.

In terms of biological role, probably catalyzes the deacetylation of acetylated carbohydrates an important step in the degradation of oligosaccharides. The protein is Carbohydrate deacetylase of Bacillus cereus (strain B4264).